A 344-amino-acid chain; its full sequence is Arginine N-succinyltransferase (344 aa).

Leu-125 provides a ligand contact to succinyl-CoA. His-229 acts as the Proton donor in catalysis.

Belongs to the arginine N-succinyltransferase family.

The enzyme catalyses succinyl-CoA + L-arginine = N(2)-succinyl-L-arginine + CoA + H(+). Its pathway is amino-acid degradation; L-arginine degradation via AST pathway; L-glutamate and succinate from L-arginine: step 1/5. Catalyzes the transfer of succinyl-CoA to arginine to produce N(2)-succinylarginine. This chain is Arginine N-succinyltransferase, found in Escherichia coli O17:K52:H18 (strain UMN026 / ExPEC).